Consider the following 244-residue polypeptide: Transcription factor A, mitochondrial (244 aa).

The N-terminal 42 residues, 1 to 42 (MALFRGMWGVLRTLGRTGVEMCAGCGGRIPSPVSLICIPKCF), are a transit peptide targeting the mitochondrion. The segment at residues 49-117 (PKKPMSSYLR…VYKEAVSKYK (69 aa)) is a DNA-binding region (HMG box 1). A phosphoserine; by PKA mark is found at S54, S55, and S60. The residue at position 66 (K66) is an N6-succinyllysine. T121 carries the phosphothreonine modification. The segment at residues 154–218 (PKRPRSAYNI…RYDNEMKSWE (65 aa)) is a DNA-binding region (HMG box 2). S159 bears the Phosphoserine; by PKA mark. Residue S192 is modified to Phosphoserine. The segment at 221–244 (MAEVGRSDLIRRSVKRPPGDISEN) is disordered.

In terms of assembly, monomer; binds DNA as a monomer. Homodimer. Component of the mitochondrial transcription initiation complex, composed at least of TFB2M, TFAM and POLRMT. In this complex TFAM recruits POLRMT to the promoter whereas TFB2M induces structural changes in POLRMT to enable promoter opening and trapping of the DNA non-template strand. Upon metabolic stress, forms a complex composed of FOXO3, SIRT3, TFAM and POLRMT. Interacts with TFB1M and TFB2M. Interacts with CLPX; this enhances DNA-binding. Post-translationally, phosphorylation by PKA within the HMG box 1 impairs DNA binding and promotes degradation by the AAA+ Lon protease. As to expression, the mitochondrial isoform is widely expressed while the nuclear isoform is testis-specific.

The protein resides in the mitochondrion. The protein localises to the mitochondrion matrix. It localises to the mitochondrion nucleoid. Its subcellular location is the nucleus. In terms of biological role, binds to the mitochondrial light strand promoter and functions in mitochondrial transcription regulation. Component of the mitochondrial transcription initiation complex, composed at least of TFB2M, TFAM and POLRMT that is required for basal transcription of mitochondrial DNA. In this complex, TFAM recruits POLRMT to a specific promoter whereas TFB2M induces structural changes in POLRMT to enable promoter opening and trapping of the DNA non-template strand. Required for accurate and efficient promoter recognition by the mitochondrial RNA polymerase. Promotes transcription initiation from the HSP1 and the light strand promoter by binding immediately upstream of transcriptional start sites. Is able to unwind DNA. Bends the mitochondrial light strand promoter DNA into a U-turn shape via its HMG boxes. Required for maintenance of normal levels of mitochondrial DNA. May play a role in organizing and compacting mitochondrial DNA. Its function is as follows. May also function as a transcriptional activator or may have a structural role in the compaction of nuclear DNA during spermatogenesis. The sequence is that of Transcription factor A, mitochondrial from Rattus norvegicus (Rat).